The following is an 801-amino-acid chain: Leucine--tRNA ligase (801 aa).

Residues 39–50 carry the 'HIGH' region motif; the sequence is PYPSGAGIHVGH. The 'KMSKS' region signature appears at 578 to 582; the sequence is KMSKS. Lys581 provides a ligand contact to ATP.

Belongs to the class-I aminoacyl-tRNA synthetase family.

It is found in the cytoplasm. The catalysed reaction is tRNA(Leu) + L-leucine + ATP = L-leucyl-tRNA(Leu) + AMP + diphosphate. This chain is Leucine--tRNA ligase, found in Mesoplasma florum (strain ATCC 33453 / NBRC 100688 / NCTC 11704 / L1) (Acholeplasma florum).